We begin with the raw amino-acid sequence, 457 residues long: Chromosomal replication initiator protein DnaA (457 aa).

The interval 1-90 (MAVSLWQQCI…RPSAKPQAPA (90 aa)) is domain I, interacts with DnaA modulators. Residues 79–120 (GSRPSAKPQAPAPAAVKAAAPQPKPGNSFVSQPEPAVSNHRS) form a disordered region. The segment covering 84–99 (AKPQAPAPAAVKAAAP) has biased composition (low complexity). Residues 91 to 120 (PAAVKAAAPQPKPGNSFVSQPEPAVSNHRS) are domain II. The segment at 121–337 (NINPTYQFDN…GALNRVIANA (217 aa)) is domain III, AAA+ region. 4 residues coordinate ATP: G165, G167, K168, and T169. The domain IV, binds dsDNA stretch occupies residues 338–457 (NFTGRPITID…YANLIRTLSS (120 aa)).

It belongs to the DnaA family. Oligomerizes as a right-handed, spiral filament on DNA at oriC.

Its subcellular location is the cytoplasm. Functionally, plays an essential role in the initiation and regulation of chromosomal replication. ATP-DnaA binds to the origin of replication (oriC) to initiate formation of the DNA replication initiation complex once per cell cycle. Binds the DnaA box (a 9 base pair repeat at the origin) and separates the double-stranded (ds)DNA. Forms a right-handed helical filament on oriC DNA; dsDNA binds to the exterior of the filament while single-stranded (ss)DNA is stabiized in the filament's interior. The ATP-DnaA-oriC complex binds and stabilizes one strand of the AT-rich DNA unwinding element (DUE), permitting loading of DNA polymerase. After initiation quickly degrades to an ADP-DnaA complex that is not apt for DNA replication. Binds acidic phospholipids. The protein is Chromosomal replication initiator protein DnaA of Shewanella amazonensis (strain ATCC BAA-1098 / SB2B).